A 210-amino-acid chain; its full sequence is uncharacterized protein (210 aa).

The Fe2OG dioxygenase domain maps to 90 to 193 (KPDQIIVNEY…RISITFRNVI (104 aa)).

This is an uncharacterized protein from Acanthamoeba polyphaga (Amoeba).